Consider the following 509-residue polypeptide: 2,3-bisphosphoglycerate-independent phosphoglycerate mutase (509 aa).

Residues Asp12 and Ser62 each coordinate Mn(2+). Ser62 acts as the Phosphoserine intermediate in catalysis. Substrate-binding positions include His123, 153-154 (RD), Arg185, Arg191, 260-263 (RPDR), and Lys333. Residues Asp400, His404, Asp441, His442, and His460 each coordinate Mn(2+).

Belongs to the BPG-independent phosphoglycerate mutase family. Monomer. It depends on Mn(2+) as a cofactor.

The enzyme catalyses (2R)-2-phosphoglycerate = (2R)-3-phosphoglycerate. It functions in the pathway carbohydrate degradation; glycolysis; pyruvate from D-glyceraldehyde 3-phosphate: step 3/5. In terms of biological role, catalyzes the interconversion of 2-phosphoglycerate and 3-phosphoglycerate. The sequence is that of 2,3-bisphosphoglycerate-independent phosphoglycerate mutase from Clostridium botulinum (strain Langeland / NCTC 10281 / Type F).